Reading from the N-terminus, the 240-residue chain is MTKRYWNINLEEMMEAGVHFGHQARKWNPRMAPYIFTERRGIHIINLTRTARFLSEACDLVFDAAGKGKQFPIVGTKYQAADSVASAAIKARCHYVNKKWLGGMLTNWSTTGTRPRKFKDLKKEQDTGQSNRLPKKEAAMLKRQLAQLQKYLGGIKYMTSLPDIVIIADQQEESTAIGECITLGIPTICLVDTDCDPDLTDIPIPANDDARASIRLILNKLTSSICEGHYSSMKGESMKS.

Belongs to the universal ribosomal protein uS2 family.

The protein resides in the plastid. It is found in the chloroplast. The polypeptide is Small ribosomal subunit protein uS2c (rps2) (Cycas taitungensis (Prince sago)).